The sequence spans 230 residues: MNDADVSKQIQQMVRFIRQEAEEKANEISVSAEEEFNIEKLQLVEAEKKKIRQEYERKEKQVEIRKKIEYSMQLNASRIKVLQAQDDLVSNMMEAASKEVLNVSRDHNSYKKLLKGLIVQSLLRLKEPAVLLRCRKDDHHLVESVLESAKEEYAQKLQVHPPEIIVDHHIYLPPGPGHHNAHGPSCSGGVVVASRDGKIVCENTLDARLDVVFRKKLPEIRKQLVSQVAA.

This sequence belongs to the V-ATPase E subunit family. In terms of assembly, V-ATPase is a heteromultimeric enzyme composed of a peripheral catalytic V1 complex (components A to H) attached to an integral membrane V0 proton pore complex (components: a, c, c', c'' and d).

In terms of biological role, subunit of the peripheral V1 complex of vacuolar ATPase essential for assembly or catalytic function. V-ATPase is responsible for acidifying a variety of intracellular compartments in eukaryotic cells. In Citrus unshiu (Satsuma mandarin), this protein is V-type proton ATPase subunit E (VATE).